The sequence spans 424 residues: Histidine--tRNA ligase (424 aa).

Belongs to the class-II aminoacyl-tRNA synthetase family. As to quaternary structure, homodimer.

Its subcellular location is the cytoplasm. The enzyme catalyses tRNA(His) + L-histidine + ATP = L-histidyl-tRNA(His) + AMP + diphosphate + H(+). In Shewanella amazonensis (strain ATCC BAA-1098 / SB2B), this protein is Histidine--tRNA ligase.